We begin with the raw amino-acid sequence, 250 residues long: 3-deoxy-manno-octulosonate cytidylyltransferase (250 aa).

This sequence belongs to the KdsB family.

Its subcellular location is the cytoplasm. The enzyme catalyses 3-deoxy-alpha-D-manno-oct-2-ulosonate + CTP = CMP-3-deoxy-beta-D-manno-octulosonate + diphosphate. It functions in the pathway nucleotide-sugar biosynthesis; CMP-3-deoxy-D-manno-octulosonate biosynthesis; CMP-3-deoxy-D-manno-octulosonate from 3-deoxy-D-manno-octulosonate and CTP: step 1/1. The protein operates within bacterial outer membrane biogenesis; lipopolysaccharide biosynthesis. Functionally, activates KDO (a required 8-carbon sugar) for incorporation into bacterial lipopolysaccharide in Gram-negative bacteria. This Pectobacterium atrosepticum (strain SCRI 1043 / ATCC BAA-672) (Erwinia carotovora subsp. atroseptica) protein is 3-deoxy-manno-octulosonate cytidylyltransferase.